Reading from the N-terminus, the 82-residue chain is Small ribosomal subunit protein bS18A (82 aa).

It belongs to the bacterial ribosomal protein bS18 family. In terms of assembly, part of the 30S ribosomal subunit. Forms a tight heterodimer with protein bS6.

Binds as a heterodimer with protein bS6 to the central domain of the 16S rRNA, where it helps stabilize the platform of the 30S subunit. This Streptomyces griseus subsp. griseus (strain JCM 4626 / CBS 651.72 / NBRC 13350 / KCC S-0626 / ISP 5235) protein is Small ribosomal subunit protein bS18A.